Reading from the N-terminus, the 288-residue chain is Serpentine receptor class gamma-1 (288 aa).

7 consecutive transmembrane segments (helical) span residues 25–45 (LFLQ…VIYI), 59–79 (FYTI…FSIF), 118–138 (FQIL…LWPL), 148–168 (LKSI…TIAI), 197–217 (FSIL…TMLI), 238–258 (VYLS…FLVL), and 268–288 (ILHG…TYVM).

The protein belongs to the nematode receptor-like protein srg family.

It is found in the membrane. This chain is Serpentine receptor class gamma-1 (srg-1), found in Caenorhabditis elegans.